Here is a 525-residue protein sequence, read N- to C-terminus: Vesicular inhibitory amino acid transporter (525 aa).

Residues 1–132 (MATLLRSKLS…WNVTNAIQGM (132 aa)) are Cytoplasmic-facing. A disordered region spans residues 69–111 (PCGDEGAEPPVEGDIHYQRGSGAPLPPSGSKDQVGAGGEFGGH). The chain crosses the membrane as a helical span at residues 133-153 (FVLGLPYAILHGGYLGLFLII). At 154–204 (FAAVVCCYTGKILIACLYEENEDGEVVRVRDSYVAIANACCAPRFPTLGGR) the chain is on the lumenal, vesicle side. The residue at position 186 (tyrosine 186) is a 3'-nitrotyrosine. A helical transmembrane segment spans residues 205–225 (VVNVAQIIELVMTCILYVVVS). Topologically, residues 226–265 (GNLMYNSFPGLPVSQKSWSIIATAVLLPCAFLKNLKAVSK) are cytoplasmic. The helical transmembrane segment at 266–286 (FSLLCTLAHFVINILVIAYCL) threads the bilayer. The Lumenal, vesicle segment spans residues 287–305 (SRARDWAWEKVKFYIDVKK). A helical transmembrane segment spans residues 306-326 (FPISIGIIVFSYTSQIFLPSL). At 327 to 341 (EGNMQQPSEFHCMMN) the chain is on the cytoplasmic side. Residues 342-362 (WTHIAACVLKGLFALVAYLTW) traverse the membrane as a helical segment. Residues 363–383 (ADETKEVITDNLPGSIRAVVN) lie on the Lumenal, vesicle side of the membrane. A helical membrane pass occupies residues 384–404 (IFLVAKALLSYPLPFFAAVEV). At 405 to 438 (LEKSLFQEGSRAFFPACYGGDGRLKSWGLTLRCA) the chain is on the cytoplasmic side. The chain crosses the membrane as a helical span at residues 439-459 (LVVFTLLMAIYVPHFALLMGL). The Lumenal, vesicle portion of the chain corresponds to 460–461 (TG). The helical transmembrane segment at 462 to 482 (SLTGAGLCFLLPSLFHLRLLW) threads the bilayer. Topologically, residues 483-489 (RKLLWHQ) are cytoplasmic. Residues 490–510 (VFFDVAIFVIGGICSVSGFVH) form a helical membrane-spanning segment. Topologically, residues 511–525 (SLEGLIEAYRTNAED) are lumenal, vesicle.

It belongs to the amino acid/polyamine transporter 2 family.

The protein resides in the cytoplasmic vesicle membrane. Its subcellular location is the presynapse. The catalysed reaction is 4-aminobutanoate(out) + n H(+)(in) = 4-aminobutanoate(in) + n H(+)(out). It carries out the reaction glycine(out) + n H(+)(in) = glycine(in) + n H(+)(out). The enzyme catalyses beta-alanine(out) + n H(+)(in) = beta-alanine(in) + n H(+)(out). Functionally, antiporter that exchanges vesicular protons for cytosolic 4-aminobutanoate or to a lesser extend glycine, thus allowing their secretion from nerve terminals. The transport is equally dependent on the chemical and electrical components of the proton gradient. May also transport beta-alanine. Acidification of GABAergic synaptic vesicles is a prerequisite for 4-aminobutanoate uptake. The protein is Vesicular inhibitory amino acid transporter of Macaca fascicularis (Crab-eating macaque).